The sequence spans 103 residues: UPF0145 protein EF_0241 (103 aa).

It belongs to the UPF0145 family.

The protein is UPF0145 protein EF_0241 of Enterococcus faecalis (strain ATCC 700802 / V583).